An 807-amino-acid chain; its full sequence is Sucrose synthase 1 (807 aa).

Residues 272–748 (MMFNVVILSP…GLKRIYEKYT (477 aa)) are GT-B glycosyltransferase.

This sequence belongs to the glycosyltransferase 1 family. Plant sucrose synthase subfamily. Forms homotetramers. In endosperm it forms both homotetramers and heterotetramers with SS2, all three possible heterotetramers are formed. Highly expressed in developing endosperm and in roots and, at lower levels, in coleoptiles and aleurone. In 3 day old roots it is detected in cap cells and along the vascular strand, starting just after the meristemic region. In 9 day old leaves it is found in the phloem. In seeds it is distributed throughout the endosperm and also found in the assimilate-unloading tissues, the nucellar projection, the vascular area and at a high concentration in the chalazal region.

The catalysed reaction is an NDP-alpha-D-glucose + D-fructose = a ribonucleoside 5'-diphosphate + sucrose + H(+). Its function is as follows. Sucrose-cleaving enzyme that provides UDP-glucose and fructose for various metabolic pathways. The protein is Sucrose synthase 1 (SS1) of Hordeum vulgare (Barley).